The chain runs to 229 residues: Large ribosomal subunit protein uL1 (229 aa).

The protein belongs to the universal ribosomal protein uL1 family. As to quaternary structure, part of the 50S ribosomal subunit.

In terms of biological role, binds directly to 23S rRNA. The L1 stalk is quite mobile in the ribosome, and is involved in E site tRNA release. Protein L1 is also a translational repressor protein, it controls the translation of the L11 operon by binding to its mRNA. The polypeptide is Large ribosomal subunit protein uL1 (Pasteurella multocida (strain Pm70)).